Here is a 254-residue protein sequence, read N- to C-terminus: MNRRHRIYEGKAKILYEGPEPGTYIQFFKDDATAFNAKKHEIIDGKGVLNNRISEHIFSHLGRLGIPTHFIKRINMREQLIKAVEIIPLEVVVRNVAAGSLAKRLGLEEGAPLPQSIIEFYYKNDSLDDPMVTEEHITAFGWAVPQEIEDIMQLSIRINDFLSGLFAGVNIQLIDFKMEFGRLWEDETMRIVLADEISPDSARLWDMQTREKMDKDRFRRDMGGLINAYQEVAKRLGIMNENEPIRPSGPVLVK.

It belongs to the SAICAR synthetase family.

It catalyses the reaction 5-amino-1-(5-phospho-D-ribosyl)imidazole-4-carboxylate + L-aspartate + ATP = (2S)-2-[5-amino-1-(5-phospho-beta-D-ribosyl)imidazole-4-carboxamido]succinate + ADP + phosphate + 2 H(+). The protein operates within purine metabolism; IMP biosynthesis via de novo pathway; 5-amino-1-(5-phospho-D-ribosyl)imidazole-4-carboxamide from 5-amino-1-(5-phospho-D-ribosyl)imidazole-4-carboxylate: step 1/2. The protein is Phosphoribosylaminoimidazole-succinocarboxamide synthase of Bartonella tribocorum (strain CIP 105476 / IBS 506).